The primary structure comprises 534 residues: Zinc finger protein 671 (534 aa).

In terms of domain architecture, KRAB spans 49–120 (VVFEDVFVYF…DQVDMTSATE (72 aa)). The C2H2-type 1; degenerate zinc-finger motif lies at 192–214 (YLCGACGKQFWFSTDFDQHQNQP). 9 C2H2-type zinc fingers span residues 285-307 (HRCG…QRIH), 313-335 (YECN…QTVH), 341-363 (YECS…RRVH), 369-391 (YQCG…QEVH), 397-419 (YVCS…QRTH), 425-447 (YECS…WRIH), 451-473 (YECS…QKVH), 479-501 (YECS…WKVH), and 507-529 (YVCS…QRVH).

Belongs to the krueppel C2H2-type zinc-finger protein family.

Its subcellular location is the nucleus. Functionally, may be involved in transcriptional regulation. The chain is Zinc finger protein 671 (ZNF671) from Homo sapiens (Human).